Consider the following 405-residue polypeptide: Imidazolonepropionase (405 aa).

Residues His-73 and His-75 each contribute to the Fe(3+) site. Positions 73 and 75 each coordinate Zn(2+). 4-imidazolone-5-propanoate-binding residues include Arg-82, Tyr-145, and His-178. Tyr-145 lines the N-formimidoyl-L-glutamate pocket. His-243 provides a ligand contact to Fe(3+). His-243 lines the Zn(2+) pocket. A 4-imidazolone-5-propanoate-binding site is contributed by Gln-246. Asp-318 provides a ligand contact to Fe(3+). Asp-318 contributes to the Zn(2+) binding site. 2 residues coordinate N-formimidoyl-L-glutamate: Asn-320 and Gly-322. Thr-323 provides a ligand contact to 4-imidazolone-5-propanoate.

This sequence belongs to the metallo-dependent hydrolases superfamily. HutI family. Zn(2+) serves as cofactor. The cofactor is Fe(3+).

It localises to the cytoplasm. It catalyses the reaction 4-imidazolone-5-propanoate + H2O = N-formimidoyl-L-glutamate. Its pathway is amino-acid degradation; L-histidine degradation into L-glutamate; N-formimidoyl-L-glutamate from L-histidine: step 3/3. Its function is as follows. Catalyzes the hydrolytic cleavage of the carbon-nitrogen bond in imidazolone-5-propanoate to yield N-formimidoyl-L-glutamate. It is the third step in the universal histidine degradation pathway. This chain is Imidazolonepropionase, found in Brucella suis biovar 1 (strain 1330).